The following is a 294-amino-acid chain: tRNA-cytidine(32) 2-sulfurtransferase (294 aa).

A PP-loop motif motif is present at residues 58 to 63; the sequence is SGGKDS. The [4Fe-4S] cluster site is built by C133, C136, and C224.

Belongs to the TtcA family. Homodimer. It depends on Mg(2+) as a cofactor. The cofactor is [4Fe-4S] cluster.

It localises to the cytoplasm. It carries out the reaction cytidine(32) in tRNA + S-sulfanyl-L-cysteinyl-[cysteine desulfurase] + AH2 + ATP = 2-thiocytidine(32) in tRNA + L-cysteinyl-[cysteine desulfurase] + A + AMP + diphosphate + H(+). Its pathway is tRNA modification. Its function is as follows. Catalyzes the ATP-dependent 2-thiolation of cytidine in position 32 of tRNA, to form 2-thiocytidine (s(2)C32). The sulfur atoms are provided by the cysteine/cysteine desulfurase (IscS) system. The chain is tRNA-cytidine(32) 2-sulfurtransferase from Ruegeria pomeroyi (strain ATCC 700808 / DSM 15171 / DSS-3) (Silicibacter pomeroyi).